The following is a 72-amino-acid chain: Long neurotoxin OH-5 (72 aa).

5 cysteine pairs are disulfide-bonded: C3/C22, C15/C43, C28/C32, C47/C58, and C59/C64.

The protein belongs to the three-finger toxin family. Long-chain subfamily. Type II alpha-neurotoxin sub-subfamily. As to expression, expressed by the venom gland.

It localises to the secreted. Binds with high affinity to muscular (alpha-1/CHRNA1) and neuronal (alpha-7/CHRNA7) nicotinic acetylcholine receptor (nAChR) and inhibits acetylcholine from binding to the receptor, thereby impairing neuromuscular and neuronal transmission. This chain is Long neurotoxin OH-5, found in Ophiophagus hannah (King cobra).